We begin with the raw amino-acid sequence, 156 residues long: Cyanate hydratase (156 aa).

Residues Arg96, Glu99, and Ser122 contribute to the active site.

Belongs to the cyanase family.

It carries out the reaction cyanate + hydrogencarbonate + 3 H(+) = NH4(+) + 2 CO2. Functionally, catalyzes the reaction of cyanate with bicarbonate to produce ammonia and carbon dioxide. The chain is Cyanate hydratase from Burkholderia ambifaria (strain MC40-6).